The chain runs to 314 residues: DNA-directed RNA polymerase subunit alpha (314 aa).

Residues 1-228 (MIEIEKPNIE…EHLNIFVGLT (228 aa)) form an alpha N-terminal domain (alpha-NTD) region. The tract at residues 245–314 (KEKVLEMTIE…ELGLGLRNEE (70 aa)) is alpha C-terminal domain (alpha-CTD).

It belongs to the RNA polymerase alpha chain family. In terms of assembly, homodimer. The RNAP catalytic core consists of 2 alpha, 1 beta, 1 beta' and 1 omega subunit. When a sigma factor is associated with the core the holoenzyme is formed, which can initiate transcription.

It carries out the reaction RNA(n) + a ribonucleoside 5'-triphosphate = RNA(n+1) + diphosphate. In terms of biological role, DNA-dependent RNA polymerase catalyzes the transcription of DNA into RNA using the four ribonucleoside triphosphates as substrates. The sequence is that of DNA-directed RNA polymerase subunit alpha from Shouchella clausii (strain KSM-K16) (Alkalihalobacillus clausii).